Consider the following 578-residue polypeptide: Signal peptide peptidase-like 2B (578 aa).

Positions 1 to 19 (MAAARLAAALLLLAAQVAC) are cleaved as a signal peptide. The Lumenal segment spans residues 20–168 (EFGVLRVVSQ…APSEPVMDYN (149 aa)). Residues 61–145 (LRDLSTTQLC…LLSHRDLQDI (85 aa)) form the PA domain. Residues Asn91 and Asn123 are each glycosylated (N-linked (GlcNAc...) asparagine). The helical transmembrane segment at 169–189 (MVIIFVMAVGTVAIGGYWAGS) threads the bilayer. Residues 190–216 (HDVKKYMKHKRDDGPEKQEDEAVDVTP) are Cytoplasmic-facing. Residues 217 to 237 (VMICVFVVMCCFMLVLLYYFY) traverse the membrane as a helical segment. Residues 238–239 (DR) lie on the Lumenal side of the membrane. A helical transmembrane segment spans residues 240-260 (LVYVIIGIFCLASSTGLYSCL). Over 261–286 (APFVRKLPFCTCRVPDNNLPYFHKRP) the chain is Cytoplasmic. The chain crosses the membrane as a helical span at residues 287 to 307 (QARMLLLALFCVTVSVVWGIF). Residues 308-312 (RNEDQ) are Lumenal-facing. The chain crosses the membrane as a helical span at residues 313 to 333 (WAWVLQDTLGIAFCLYMLKTI). The Cytoplasmic portion of the chain corresponds to 334–341 (RLPTFKAC). Residues 342 to 362 (TLLLLVLFIYDIFFVFITPFL) form a helical membrane-spanning segment. The active site involves Asp352. Topologically, residues 363-405 (TKSGNSIMVEVATGPSNSSTHEKLPMVLKVPRLNTSPLSLCDR) are lumenal. A helical transmembrane segment spans residues 406 to 426 (PFSLLGFGDILVPGLLVAYCH). Asp414 is an active-site residue. At 427-438 (RFDIQVQSSRIY) the chain is on the cytoplasmic side. Residues 439–459 (FVACTIAYGLGLLVTFVALVL) form a helical membrane-spanning segment. The Lumenal segment spans residues 460 to 463 (MQRG). Residues 464–484 (QPALLYLVPCTLLTSCTVALW) traverse the membrane as a helical segment. Positions 465–467 (PAL) match the PAL motif. The Cytoplasmic segment spans residues 485–578 (RRELGAFWTG…IPVVKPETSA (94 aa)). A disordered region spans residues 502–578 (PQTPWAATQG…IPVVKPETSA (77 aa)). A compositionally biased stretch (low complexity) spans 520 to 529 (SSLSEQPPSE).

It belongs to the peptidase A22B family. In terms of assembly, monomer. Homodimer. Interacts with ITM2B and TNF. Post-translationally, glycosylated.

It is found in the cell membrane. Its subcellular location is the golgi apparatus membrane. The protein resides in the lysosome membrane. It localises to the endosome membrane. The protein localises to the membrane. Functionally, intramembrane-cleaving aspartic protease (I-CLiP) that cleaves type II membrane signal peptides in the hydrophobic plane of the membrane. Functions in ITM2B and TNF processing. Catalyzes the intramembrane cleavage of the anchored fragment of shed TNF-alpha (TNF), which promotes the release of the intracellular domain (ICD) for signaling to the nucleus. May play a role in the regulation of innate and adaptive immunity. This chain is Signal peptide peptidase-like 2B, found in Mus musculus (Mouse).